We begin with the raw amino-acid sequence, 227 residues long: Phosphoglycolate phosphatase (227 aa).

D8 serves as the catalytic Nucleophile. Mg(2+)-binding residues include D8 and D10. Residue K152 participates in substrate binding. Mg(2+) contacts are provided by D175 and D179.

This sequence belongs to the archaeal SPP-like hydrolase family. The cofactor is Mg(2+).

The catalysed reaction is 2-phosphoglycolate + H2O = glycolate + phosphate. Its function is as follows. Catalyzes the dephosphorylation of 2-phosphoglycolate. In Halorubrum lacusprofundi (strain ATCC 49239 / DSM 5036 / JCM 8891 / ACAM 34), this protein is Phosphoglycolate phosphatase.